Here is a 288-residue protein sequence, read N- to C-terminus: Pantothenate synthetase (288 aa).

Residue 30-37 coordinates ATP; the sequence is MGNLHNGH. Histidine 37 (proton donor) is an active-site residue. Residue glutamine 61 participates in (R)-pantoate binding. Glutamine 61 serves as a coordination point for beta-alanine. Residue 149-152 participates in ATP binding; sequence GQKD. Glutamine 155 is a (R)-pantoate binding site. ATP is bound by residues valine 178 and 186-189; that span reads LSSR.

The protein belongs to the pantothenate synthetase family. In terms of assembly, homodimer.

Its subcellular location is the cytoplasm. It catalyses the reaction (R)-pantoate + beta-alanine + ATP = (R)-pantothenate + AMP + diphosphate + H(+). The protein operates within cofactor biosynthesis; (R)-pantothenate biosynthesis; (R)-pantothenate from (R)-pantoate and beta-alanine: step 1/1. In terms of biological role, catalyzes the condensation of pantoate with beta-alanine in an ATP-dependent reaction via a pantoyl-adenylate intermediate. The protein is Pantothenate synthetase of Tolumonas auensis (strain DSM 9187 / NBRC 110442 / TA 4).